The sequence spans 167 residues: Epithelial membrane protein 2 (167 aa).

The helical transmembrane segment at 1–21 (MLVLLAFIIAFHITSAALLFI) threads the bilayer. 3 N-linked (GlcNAc...) asparagine glycosylation sites follow: Asn-44, Asn-47, and Asn-52. 3 consecutive transmembrane segments (helical) span residues 67–87 (TMILSTILCCIAFFIFVLQLF), 95–115 (FVLTSIIQLMSCLCVMIAASI), and 143–163 (YILAWVAFACTFISGMMYLIL).

It belongs to the PMP-22/EMP/MP20 family. As to quaternary structure, interacts with PTK2; regulates PTK2 activation and localization. Interacts with ITGB3; regulates the levels of the heterodimer ITGA5-ITGB3 integrin surface expression. Interacts with P2RX7 (via C-terminus). Interacts with ITGB1; the interaction may be direct or indirect and ITGB1 has a heterodimer form. Expressed in ciliary body epithelia, sclera, cornea, and retinal pigment epithelium (at protein level). Expressed in lung and endometrial tissue; expression is particularly abundant in secretory endometrium (at protein level). Expressed in placental villous syncytiotrophoblasts and cytotrophoblasts and on the membrane of interstitial trophoblasts (at protein level).

It is found in the golgi apparatus membrane. The protein localises to the cell membrane. It localises to the apical cell membrane. Its subcellular location is the membrane raft. The protein resides in the cytoplasm. It is found in the nucleus. The protein localises to the perinuclear region. In terms of biological role, functions as a key regulator of cell membrane composition by regulating protein surface expression. Also, plays a role in regulation of processes including cell migration, cell proliferation, cell contraction and cell adhesion. Regulates transepithelial migration of neutrophils into the alveolar lumen, potentially via mediation of cell surface expression of adhesion markers and lipid raft formation. Negatively regulates caveolae formation by reducing CAV1 expression and CAV1 amount by increasing lysosomal degradation. Facilitates surface trafficking and formation of lipid rafts bearing GPI-anchor proteins. Regulates surface expression of MHC1 and ICAM1 proteins increasing susceptibility to T-cell mediated cytotoxicity. Regulates the plasma membrane expression of the integrin heterodimers ITGA6-ITGB1, ITGA5-ITGB3 and ITGA5-ITGB1 resulting in modulation of cell-matrix adhesion. Also regulates many processes through PTK2. Regulates blood vessel endothelial cell migration and angiogenesis by regulating VEGF protein expression through PTK2 activation. Regulates cell migration and cell contraction through PTK2 and SRC activation. Regulates focal adhesion density, F-actin conformation and cell adhesion capacity through interaction with PTK2. Positively regulates cell proliferation. Plays a role during cell death and cell blebbing. Promotes angiogenesis and vasculogenesis through induction of VEGFA via a HIF1A-dependent pathway. Also plays a role in embryo implantation by regulating surface trafficking of integrin heterodimer ITGA5-ITGB3. Plays a role in placental angiogenesis and uterine natural killer cell regulation at the maternal-fetal placental interface, however not required in the maternal tissues for a viable pregnancy. Involved in the early stages of embryogenic development and cardiogenesis, potentially via regulation of epithelial-mesenchymal transition timing. May play a role in glomerular filtration. This is Epithelial membrane protein 2 (EMP2) from Homo sapiens (Human).